A 64-amino-acid polypeptide reads, in one-letter code: Large ribosomal subunit protein bL33c (64 aa).

The protein belongs to the bacterial ribosomal protein bL33 family.

It is found in the plastid. The protein resides in the chloroplast. This Phaeodactylum tricornutum (strain CCAP 1055/1) protein is Large ribosomal subunit protein bL33c.